Here is a 493-residue protein sequence, read N- to C-terminus: Probable cytochrome P450 508A2 (493 aa).

A helical transmembrane segment spans residues 1 to 21 (MIFGIIVYLFLIYILHNAYSK). A heme-binding site is contributed by Cys439.

This sequence belongs to the cytochrome P450 family. Heme is required as a cofactor.

The protein resides in the membrane. The polypeptide is Probable cytochrome P450 508A2 (cyp508A2-1) (Dictyostelium discoideum (Social amoeba)).